The chain runs to 312 residues: MAQQGQGSMDPAALDDIIRRLLDYRNPKPGTKQAMLNESEIRQLCIVSREIFLQQPNLLELEAPIKICGDIHGQYSDLLRLFEYGGFPPTANYLFLGDYVDRGKQSLETICLLLAYKIKYPENFFLLRGNHECASINRIYGFYDECKRRFSVRLWKVFTDSFNCLPVAAVIDDKILCMHGGLSPDLTNVEQIKNIKRPTDVPDSGLLCDLLWSDPSKDVKGWGMNDRGVSYTFGPDKVAEFLIKNDMDLICRAHQVVEDGYEFFADRQLVTIFSAPNYCGEFDNAGAMMSVDESLMCSFQILKPADRKPRFL.

Residue A2 is modified to N-acetylalanine. Residues D70, H72, D98, and N130 each coordinate Mn(2+). H131 (proton donor) is an active-site residue. Residues H179 and H254 each contribute to the Mn(2+) site.

Belongs to the PPP phosphatase family. PP-1 subfamily. As to quaternary structure, interacts with SRK2D/SNRK2.2 and SRK2E/SNRK2.6. Mn(2+) serves as cofactor.

It is found in the nucleus. The protein localises to the cytoplasm. The enzyme catalyses O-phospho-L-seryl-[protein] + H2O = L-seryl-[protein] + phosphate. It catalyses the reaction O-phospho-L-threonyl-[protein] + H2O = L-threonyl-[protein] + phosphate. Phosphatase activity is strongly reduced by the protein phosphatase inhibitor 2 (I-2). In terms of biological role, serine/threonine-protein phosphatase that possesses phosphatase activity toward para-nitrophenyl phosphate (pNPP) in vitro. The sequence is that of Serine/threonine-protein phosphatase PP1 isozyme 2 from Arabidopsis thaliana (Mouse-ear cress).